Here is a 565-residue protein sequence, read N- to C-terminus: Bifunctional dihydrofolate reductase-thymidylate synthase 2 (565 aa).

The DHFR domain maps to 65 to 242; sequence TYQVVVAATK…LRFSFTTHVR (178 aa). Residue valine 69 coordinates substrate. NADP(+) is bound by residues alanine 71 and 77–83; that span reads GIGKDGK. Residue aspartate 91 coordinates substrate. Residues 115-117 and 136-139 each bind NADP(+); these read RKT and LSRS. Isoleucine 178 contacts substrate. Residue 179–186 coordinates NADP(+); that stretch reads GGGDILRE. Threonine 199 serves as a coordination point for substrate. The hinge stretch occupies residues 245–280; that stretch reads SSSAGEASDESDGSKVLQVDWKKFSSVLPKMIFDRH. The tract at residues 281 to 565 is thymidylate synthase; sequence EEYLYLNLVK…HKKIDMKMAV (285 aa). Arginine 302 contacts dUMP. The active site involves cysteine 447. DUMP contacts are provided by residues histidine 448, 466–470, asparagine 478, and 508–510; these read QRSAD and HVY.

It in the N-terminal section; belongs to the dihydrofolate reductase family. This sequence in the C-terminal section; belongs to the thymidylate synthase family. Heterodimer or homodimer.

It carries out the reaction (6S)-5,6,7,8-tetrahydrofolate + NADP(+) = 7,8-dihydrofolate + NADPH + H(+). It catalyses the reaction dUMP + (6R)-5,10-methylene-5,6,7,8-tetrahydrofolate = 7,8-dihydrofolate + dTMP. Its pathway is cofactor biosynthesis; tetrahydrofolate biosynthesis; 5,6,7,8-tetrahydrofolate from 7,8-dihydrofolate: step 1/1. Bifunctional enzyme. Involved in de novo dTMP biosynthesis. Key enzyme in folate metabolism. Can play two different roles depending on the source of dihydrofolate: de novo synthesis of tetrahydrofolate or recycling of the dihydrofolate released as one of the end products of the TS catalyzed reaction. Catalyzes an essential reaction for de novo glycine and purine synthesis, DNA precursor synthesis, and for the conversion of dUMP to dTMP. This is Bifunctional dihydrofolate reductase-thymidylate synthase 2 (THY-2) from Arabidopsis thaliana (Mouse-ear cress).